A 316-amino-acid chain; its full sequence is Malate dehydrogenase (316 aa).

Residues 12–17 and aspartate 36 contribute to the NAD(+) site; that span reads GAGNIG. Residues arginine 85 and arginine 91 each contribute to the substrate site. NAD(+) contacts are provided by residues asparagine 98 and 121–123; that span reads VTN. Substrate contacts are provided by asparagine 123 and arginine 154. The Proton acceptor role is filled by histidine 178.

This sequence belongs to the LDH/MDH superfamily. MDH type 3 family.

It catalyses the reaction (S)-malate + NAD(+) = oxaloacetate + NADH + H(+). Its function is as follows. Catalyzes the reversible oxidation of malate to oxaloacetate. This is Malate dehydrogenase from Wolbachia sp. subsp. Brugia malayi (strain TRS).